A 277-amino-acid chain; its full sequence is Cis-2,3-dihydrobiphenyl-2,3-diol dehydrogenase (277 aa).

9 to 33 (LITGGASGLGRALVDRFVAERAKVA) contacts NAD(+). Substrate is bound at residue Ser142. The active-site Proton acceptor is the Tyr155.

It belongs to the short-chain dehydrogenases/reductases (SDR) family. In terms of assembly, homotetramer.

It carries out the reaction (2R,3S)-3-phenylcyclohexa-3,5-diene-1,2-diol + NAD(+) = biphenyl-2,3-diol + NADH + H(+). Its pathway is xenobiotic degradation; biphenyl degradation; 2-hydroxy-2,4-pentadienoate and benzoate from biphenyl: step 2/4. The chain is Cis-2,3-dihydrobiphenyl-2,3-diol dehydrogenase (bphB) from Pseudomonas putida (Arthrobacter siderocapsulatus).